We begin with the raw amino-acid sequence, 569 residues long: Endo-1,4-beta-xylanase 5 (569 aa).

The first 25 residues, 1-25 (MKNINNGFFLCMLLLLWCFVHSGIS), serve as a signal peptide directing secretion. Residues Asn-197, Asn-261, and Asn-307 are each glycosylated (N-linked (GlcNAc...) asparagine). The region spanning 209–500 (EQTKPSFLLG…NTATGDVIDK (292 aa)) is the GH10 domain. The active-site Proton donor is Glu-332. The N-linked (GlcNAc...) asparagine glycan is linked to Asn-346. Catalysis depends on Glu-439, which acts as the Nucleophile. 3 N-linked (GlcNAc...) asparagine glycosylation sites follow: Asn-490, Asn-536, and Asn-544.

This sequence belongs to the glycosyl hydrolase 10 (cellulase F) family.

The enzyme catalyses Endohydrolysis of (1-&gt;4)-beta-D-xylosidic linkages in xylans.. It functions in the pathway glycan degradation; xylan degradation. In terms of biological role, binds to and hydrolyzes insoluble and soluble xylan substrates. This chain is Endo-1,4-beta-xylanase 5, found in Arabidopsis thaliana (Mouse-ear cress).